The sequence spans 314 residues: tRNA dimethylallyltransferase (314 aa).

Residue 11–18 (GPTAVGKT) coordinates ATP. Position 13 to 18 (13 to 18 (TAVGKT)) interacts with substrate. The segment at 36 to 39 (DSMQ) is interaction with substrate tRNA.

This sequence belongs to the IPP transferase family. As to quaternary structure, monomer. Mg(2+) serves as cofactor.

It catalyses the reaction adenosine(37) in tRNA + dimethylallyl diphosphate = N(6)-dimethylallyladenosine(37) in tRNA + diphosphate. Catalyzes the transfer of a dimethylallyl group onto the adenine at position 37 in tRNAs that read codons beginning with uridine, leading to the formation of N6-(dimethylallyl)adenosine (i(6)A). The chain is tRNA dimethylallyltransferase from Bacillus anthracis.